Reading from the N-terminus, the 533-residue chain is 2,3-bisphosphoglycerate-independent phosphoglycerate mutase (533 aa).

D15 and S65 together coordinate Mn(2+). The active-site Phosphoserine intermediate is the S65. Substrate is bound by residues H126, R156–D157, R188, R194, R258–R261, and K331. Mn(2+) is bound by residues D398, H402, D439, H440, and H457.

The protein belongs to the BPG-independent phosphoglycerate mutase family. In terms of assembly, monomer. Mn(2+) is required as a cofactor.

The enzyme catalyses (2R)-2-phosphoglycerate = (2R)-3-phosphoglycerate. The protein operates within carbohydrate degradation; glycolysis; pyruvate from D-glyceraldehyde 3-phosphate: step 3/5. Functionally, catalyzes the interconversion of 2-phosphoglycerate and 3-phosphoglycerate. This is 2,3-bisphosphoglycerate-independent phosphoglycerate mutase from Nostoc sp. (strain PCC 7120 / SAG 25.82 / UTEX 2576).